The sequence spans 183 residues: Photosystem I assembly protein Ycf4 (183 aa).

The next 2 membrane-spanning stretches (helical) occupy residues 17–39 (NYLL…FLSY) and 59–81 (FIPQ…IYIY).

This sequence belongs to the Ycf4 family.

The protein localises to the plastid. It localises to the chloroplast thylakoid membrane. Its function is as follows. Seems to be required for the assembly of the photosystem I complex. The polypeptide is Photosystem I assembly protein Ycf4 (Cyanidium caldarium (Red alga)).